The chain runs to 116 residues: Vesicle-associated membrane protein 2 (116 aa).

The disordered stretch occupies residues 1 to 28; the sequence is MSATAATVPPAAPAGEGGPPAPPPNLTS. The residue at position 2 (S2) is an N-acetylserine. The Cytoplasmic portion of the chain corresponds to 2-94; it reads SATAATVPPA…KRKYWWKNLK (93 aa). Residues 31–91 enclose the v-SNARE coiled-coil homology domain; sequence RLQQTQAQVD…AKLKRKYWWK (61 aa). Positions 92 to 116 are required for interaction with SEPT8; it reads NLKMMIILGVICAIILIIIIVYFST. The chain crosses the membrane as a helical; Anchor for type IV membrane protein span at residues 95-114; the sequence is MMIILGVICAIILIIIIVYF. Residues 115–116 lie on the Vesicular side of the membrane; the sequence is ST.

It belongs to the synaptobrevin family. In terms of assembly, part of the SNARE core complex containing SNAP25, VAMP2 and STX1A; this complex constitutes the basic catalytic machinery of the complex neurotransmitter release apparatus. Recruited to the SNARE complex following binding of the SNARE complex component STX1A to STXBP1. This complex binds to CPLX1. Interacts with VAPA and VAPB. Interacts (via N-terminus) with KCNB1 (via N-terminus and C-terminus); stimulates the channel inactivation rate of KCNB1. Interacts with POPDC1 and STX4. Interacts with WDFY2, PRKCZ and PRKCI. Forms a complex with WDFY2 and PRKCZ. Interacts with SEPT8; the interaction inhibits interaction of VAMP2 with SYP. Interacts with SYP; the interaction is inhibited by interaction with SEPT8. Interacts with PICALM. Interacts with alpha-synuclein/SNCA. Interacts with STX3 isoform 3B. Post-translationally, phosphorylated by PRKCZ in vitro and this phosphorylation is increased in the presence of WDFY2. (Microbial infection) Targeted and hydrolyzed by C.botulinum neurotoxin type B (BoNT/B, botB); 20 hours after treatment of spinal cord cells almost all the protein has been digested. BoNT/B hydrolyzes the 76-Gln-|-Phe-77 bond and inhibits neurotransmitter release. In terms of processing, (Microbial infection) Targeted and hydrolyzed by C.tetani toxin (tetX); 20 hours after treatment of spinal cord cells almost all the protein has been digested. Tetanus toxin hydrolyzes the 76-Gln-|-Phe-77 bond and inhibits neurotransmitter release. In terms of tissue distribution, expressed in the outer plexiform layer of the retina (at protein level).

It localises to the cytoplasmic vesicle. Its subcellular location is the secretory vesicle. The protein resides in the synaptic vesicle membrane. The protein localises to the cell membrane. Its function is as follows. Involved in the targeting and/or fusion of transport vesicles to their target membrane. Major SNARE protein of synaptic vesicles which mediates fusion of synaptic vesicles to release neurotransmitters. Essential for fast vesicular exocytosis and activity-dependent neurotransmitter release as well as fast endocytosis that mediates rapid reuse of synaptic vesicles. Modulates the gating characteristics of the delayed rectifier voltage-dependent potassium channel KCNB1. The chain is Vesicle-associated membrane protein 2 (Vamp2) from Mus musculus (Mouse).